The primary structure comprises 309 residues: Prepilin leader peptidase/N-methyltransferase (309 aa).

Residues 35-55 (MQLAFAIVLGLVVGSFLNVVV) form a helical membrane-spanning segment. 4 residues coordinate Zn(2+): cysteine 96, cysteine 99, cysteine 121, and cysteine 124. 6 helical membrane passes run 147-167 (LALF…AALL), 183-203 (LTLP…FASL), 207-227 (VIGA…FKLL), 230-250 (IEGI…WLGW), 253-273 (LPQV…VATW), and 288-308 (FLAA…LLLG).

The protein belongs to the peptidase A24 family. Zn(2+) serves as cofactor.

It localises to the cell inner membrane. The enzyme catalyses Typically cleaves a -Gly-|-Phe- bond to release an N-terminal, basic peptide of 5-8 residues from type IV prepilin, and then N-methylates the new N-terminal amino group, the methyl donor being S-adenosyl-L-methionine.. Plays an essential role in type IV pili and type II pseudopili formation by proteolytically removing the leader sequence from substrate proteins and subsequently monomethylating the alpha-amino group of the newly exposed N-terminal phenylalanine. The protein is Prepilin leader peptidase/N-methyltransferase (gspO) of Burkholderia pseudomallei (strain 1026b).